We begin with the raw amino-acid sequence, 578 residues long: ER degradation-enhancing alpha-mannosidase-like protein 2 (578 aa).

The first 21 residues, 1 to 21, serve as a signal peptide directing secretion; the sequence is MPFRLLIPLGLLCALLPQHHG. N-linked (GlcNAc...) asparagine glycans are attached at residues N90, N112, N289, and N450. The disordered stretch occupies residues 517–557; that stretch reads KNTVSSGPWEPPARPGTLFSPENHDQARERKPAKQKVPLLS. Residues 538–548 are compositionally biased toward basic and acidic residues; sequence ENHDQARERKP.

The protein belongs to the glycosyl hydrolase 47 family. N-glycosylated. As to expression, expressed ubiquitously in all tissues tested with slightly higher levels detected in small intestine and peripheral blood leukocytes and weakest levels in brain and skeletal muscle.

It is found in the endoplasmic reticulum lumen. Functionally, involved in the endoplasmic reticulum-associated degradation (ERAD) pathway that targets misfolded glycoproteins for degradation in an N-glycan-dependent manner. May initiate ERAD by promoting the first mannose trimming step of ERAD substrates, from Man9GlcNAc2 to Man8GlcNAc2. Seems to recognize and bind to exposed hydrophobic regions in target proteins. This chain is ER degradation-enhancing alpha-mannosidase-like protein 2 (EDEM2), found in Homo sapiens (Human).